We begin with the raw amino-acid sequence, 411 residues long: Serine hydroxymethyltransferase (411 aa).

(6S)-5,6,7,8-tetrahydrofolate-binding positions include Leu-113 and 117–119 (GHL). The residue at position 222 (Lys-222) is an N6-(pyridoxal phosphate)lysine. (6S)-5,6,7,8-tetrahydrofolate-binding positions include Glu-238 and 346 to 348 (SPF).

This sequence belongs to the SHMT family. As to quaternary structure, homodimer. Pyridoxal 5'-phosphate serves as cofactor.

Its subcellular location is the cytoplasm. The catalysed reaction is (6R)-5,10-methylene-5,6,7,8-tetrahydrofolate + glycine + H2O = (6S)-5,6,7,8-tetrahydrofolate + L-serine. It functions in the pathway one-carbon metabolism; tetrahydrofolate interconversion. The protein operates within amino-acid biosynthesis; glycine biosynthesis; glycine from L-serine: step 1/1. In terms of biological role, catalyzes the reversible interconversion of serine and glycine with tetrahydrofolate (THF) serving as the one-carbon carrier. This reaction serves as the major source of one-carbon groups required for the biosynthesis of purines, thymidylate, methionine, and other important biomolecules. Also exhibits THF-independent aldolase activity toward beta-hydroxyamino acids, producing glycine and aldehydes, via a retro-aldol mechanism. The chain is Serine hydroxymethyltransferase from Prochlorococcus marinus (strain NATL1A).